The chain runs to 273 residues: Large ribosomal subunit protein uL2cz/uL2cy (273 aa).

2 disordered regions span residues 1 to 22 (MAKH…DRQV) and 225 to 273 (PVDH…RRRK).

It belongs to the universal ribosomal protein uL2 family. Part of the 50S ribosomal subunit.

The protein resides in the plastid. Its subcellular location is the chloroplast. The polypeptide is Large ribosomal subunit protein uL2cz/uL2cy (rpl2-A) (Zea mays (Maize)).